The primary structure comprises 391 residues: Probable chaperonin-like protein PrmG (391 aa).

A disordered region spans residues 153–191; the sequence is TTRWSVRSSPPPSNTSARTASSPPRRATHSGCRSRSSTA. A compositionally biased stretch (polar residues) spans 154-174; the sequence is TRWSVRSSPPPSNTSARTASS.

The protein belongs to the chaperonin (HSP60) family.

Functionally, probably plays an essential role in the productive folding of PrmA and PrmC, and thus in the formation of the active PrmABCD complex. In Gordonia sp. (strain TY-5), this protein is Probable chaperonin-like protein PrmG.